A 429-amino-acid polypeptide reads, in one-letter code: Adenylosuccinate synthetase (429 aa).

GTP contacts are provided by residues 12–18 (GDEGKGK) and 40–42 (GHT). Asp-13 serves as the catalytic Proton acceptor. Mg(2+) contacts are provided by Asp-13 and Gly-40. Residues 13-16 (DEGK), 38-41 (NAGH), Thr-128, Arg-142, Gln-223, Thr-238, and Arg-302 contribute to the IMP site. The active-site Proton donor is the His-41. 298-304 (VNTGRPR) lines the substrate pocket. Residues Arg-304, 330–332 (KLD), and 412–414 (GVG) contribute to the GTP site.

This sequence belongs to the adenylosuccinate synthetase family. As to quaternary structure, homodimer. Mg(2+) is required as a cofactor.

The protein resides in the cytoplasm. The catalysed reaction is IMP + L-aspartate + GTP = N(6)-(1,2-dicarboxyethyl)-AMP + GDP + phosphate + 2 H(+). It participates in purine metabolism; AMP biosynthesis via de novo pathway; AMP from IMP: step 1/2. In terms of biological role, plays an important role in the de novo pathway of purine nucleotide biosynthesis. Catalyzes the first committed step in the biosynthesis of AMP from IMP. This Kocuria rhizophila (strain ATCC 9341 / DSM 348 / NBRC 103217 / DC2201) protein is Adenylosuccinate synthetase.